The primary structure comprises 2835 residues: Vanchrobactin synthetase VabF (2835 aa).

The condensation 1 stretch occupies residues 16–452; it reads EDQWPLIGTQ…IPPSEKQQIT (437 aa). The segment at 473–880 is adenylation 1; sequence QQTVESKPNE…GRCDHQIKIR (408 aa). A Carrier 1 domain is found at 988–1062; sequence APITQPEQLL…MMAGQMVPLQ (75 aa). O-(pantetheine 4'-phosphoryl)serine is present on Ser-1023. Condensation stretches follow at residues 1081 to 1499 and 1539 to 1961; these read WFEE…KIQQ and DVLP…EWDL. The adenylation 2 stretch occupies residues 1992 to 2394; that stretch reads QQQRSPHQLA…GRSDDQIKIR (403 aa). A Carrier 2 domain is found at 2503–2578; it reads NAHPGLETQL…KLASLLLDDD (76 aa). Position 2538 is an O-(pantetheine 4'-phosphoryl)serine (Ser-2538). Positions 2601 to 2821 are thioesterase; sequence ALFCVNSASG…APENVRQIGE (221 aa).

The protein belongs to the NRP synthetase family. Requires pantetheine 4'-phosphate as cofactor.

The catalysed reaction is holo-[peptidyl-carrier protein] + L-arginine + ATP = L-arginyl-[peptidyl-carrier protein] + AMP + diphosphate. The enzyme catalyses holo-[peptidyl-carrier protein] + L-serine + ATP = L-seryl-[peptidyl-carrier protein] + AMP + diphosphate. It participates in siderophore biosynthesis. Functionally, involved in the synthesis of the siderophore vanchrobactin. Probably adenylates L-arginine via its first adenylation domain and loads it onto its first peptidyl carrier domain via a thioester linkage to the phosphopanthetheine moiety. In addition, may adenylate L-serine via its second adenylation domain and loads it onto its second peptidyl carrier domain via a thioester linkage to the phosphopanthetheine moiety. The thioesterase domain may release vanchrobactin after condensation of the siderophore components. In Vibrio anguillarum (Listonella anguillarum), this protein is Vanchrobactin synthetase VabF.